A 250-amino-acid polypeptide reads, in one-letter code: 2,3-bisphosphoglycerate-dependent phosphoglycerate mutase (250 aa).

Residues 10-17, 23-24, Arg-62, 89-92, Lys-100, 116-117, and 185-186 each bind substrate; these read RHGESQWN, TG, ERHY, RR, and GN. His-11 (tele-phosphohistidine intermediate) is an active-site residue. Glu-89 (proton donor/acceptor) is an active-site residue.

Belongs to the phosphoglycerate mutase family. BPG-dependent PGAM subfamily. As to quaternary structure, homodimer.

It catalyses the reaction (2R)-2-phosphoglycerate = (2R)-3-phosphoglycerate. The protein operates within carbohydrate degradation; glycolysis; pyruvate from D-glyceraldehyde 3-phosphate: step 3/5. Its function is as follows. Catalyzes the interconversion of 2-phosphoglycerate and 3-phosphoglycerate. This chain is 2,3-bisphosphoglycerate-dependent phosphoglycerate mutase, found in Erwinia tasmaniensis (strain DSM 17950 / CFBP 7177 / CIP 109463 / NCPPB 4357 / Et1/99).